We begin with the raw amino-acid sequence, 77 residues long: Small ribosomal subunit protein bS18 (77 aa).

It belongs to the bacterial ribosomal protein bS18 family. In terms of assembly, part of the 30S ribosomal subunit. Forms a tight heterodimer with protein bS6.

In terms of biological role, binds as a heterodimer with protein bS6 to the central domain of the 16S rRNA, where it helps stabilize the platform of the 30S subunit. The polypeptide is Small ribosomal subunit protein bS18 (Bacillus cereus (strain ATCC 10987 / NRS 248)).